We begin with the raw amino-acid sequence, 300 residues long: Protein SPEAR2 (300 aa).

Residues 1–11 (MCSNNNTSSGS) show a composition bias toward polar residues. A disordered region spans residues 1–64 (MCSNNNTSSG…PPLSSSPSLP (64 aa)). Residues 25–38 (CRKKQKKDKVRRRG) are compositionally biased toward basic residues. The SPL motif lies at 37–45 (RGPGVAELE). Positions 43-54 (ELEKIRLQEEYK) are enriched in basic and acidic residues. Positions 55-64 (PPLSSSPSLP) are enriched in low complexity. An EAR motif is present at residues 294-300 (IDLNLKL).

Homodimer and heterodimer with SPL and SPEARs. Interacts with SPL, SPEAR1, SPEAR3 and SPEAR4. As to expression, expressed in leaves.

Functionally, adapter-like transcriptional repressor recruiting TPL/TPR corepressors to inhibit TCP transcription factors. May be involved in leaf development. The polypeptide is Protein SPEAR2 (Arabidopsis thaliana (Mouse-ear cress)).